The sequence spans 400 residues: Cytohesin-3 (400 aa).

A coiled-coil region spans residues 14-61; that stretch reads EDLSLEEREELLDIRRRKKELIDDIERLKYEIAEVMTEIDNLTSVEES. In terms of domain architecture, SEC7 spans 77-206; sequence FNMDPKKGIQ…IIMLNTSLHN (130 aa). In terms of domain architecture, PH spans 264-381; that stretch reads NPDREGWLLK…WMKSIKASIS (118 aa). A 1,2-diacyl-sn-glycero-3-phospho-(1D-myo-inositol-3,4,5-trisphosphate) is bound by residues 273–281, arginine 285, tyrosine 296, arginine 306, and asparagine 355; that span reads KLGGGRVKT. Residues 392–400 are C-terminal autoinhibitory region; the sequence is RKRRIANKK.

As to quaternary structure, interacts with TAMALIN. Interacts with ARF6. Interacts with FRMD4A. Interacts with FRMD4B. Almost absent from liver, thymus and peripheral blood lymphocytes.

Its subcellular location is the cytoplasm. The protein localises to the cytosol. The protein resides in the cell membrane. It localises to the cell junction. It is found in the adherens junction. Its subcellular location is the tight junction. Its function is as follows. Promotes guanine-nucleotide exchange on ARF1 and ARF6. Promotes the activation of ARF factors through replacement of GDP with GTP. Plays a role in the epithelial polarization. The protein is Cytohesin-3 of Homo sapiens (Human).